The sequence spans 510 residues: D-allose import ATP-binding protein AlsA (510 aa).

2 ABC transporter domains span residues 6-245 and 260-509; these read ISMA…VGRE and LAHE…ALPQ. Residue 38-45 coordinates ATP; the sequence is GENGAGKS.

The protein belongs to the ABC transporter superfamily. D-allose importer (TC 3.A.1.2.6) family. As to quaternary structure, the complex is composed of two ATP-binding proteins (AlsA), two transmembrane proteins (AlsC) and a solute-binding protein (AlsB).

Its subcellular location is the cell inner membrane. The enzyme catalyses D-allose(out) + ATP + H2O = D-allose(in) + ADP + phosphate + H(+). In terms of biological role, part of the ABC transporter complex AlsBAC involved in D-allose import. Probably responsible for energy coupling to the transport system. This Escherichia coli (strain K12) protein is D-allose import ATP-binding protein AlsA (alsA).